The following is a 149-amino-acid chain: Large ribosomal subunit protein bL9 (149 aa).

It belongs to the bacterial ribosomal protein bL9 family.

Binds to the 23S rRNA. In Bacillus velezensis (strain DSM 23117 / BGSC 10A6 / LMG 26770 / FZB42) (Bacillus amyloliquefaciens subsp. plantarum), this protein is Large ribosomal subunit protein bL9.